The chain runs to 273 residues: Putative phosphoenolpyruvate synthase regulatory protein (273 aa).

153 to 160 provides a ligand contact to ADP; the sequence is GVSRSGKT.

This sequence belongs to the pyruvate, phosphate/water dikinase regulatory protein family. PSRP subfamily.

The catalysed reaction is [pyruvate, water dikinase] + ADP = [pyruvate, water dikinase]-phosphate + AMP + H(+). The enzyme catalyses [pyruvate, water dikinase]-phosphate + phosphate + H(+) = [pyruvate, water dikinase] + diphosphate. Its function is as follows. Bifunctional serine/threonine kinase and phosphorylase involved in the regulation of the phosphoenolpyruvate synthase (PEPS) by catalyzing its phosphorylation/dephosphorylation. This is Putative phosphoenolpyruvate synthase regulatory protein from Leptothrix cholodnii (strain ATCC 51168 / LMG 8142 / SP-6) (Leptothrix discophora (strain SP-6)).